We begin with the raw amino-acid sequence, 707 residues long: MEVNNMSKTRVYELAKELNISSKDLLSKLSDLDIKVKNHMSTLEDEEVELIKDLLAEKPKEEKQKDQKNHEQEAQDKEEKEIEEDSFYEDREEKRAYKKSFKKGGKKNKKLQKKFVSEESAKEDEIKIITIPEFLTVKELAEKMKVNPTEIIKKLIAQGIMVTVNQQIDFETASKIAEEYGFLVDKEEVKDELEAIFEDTPDREEDLKPRPPIVTVMGHVDHGKTSLLDAIRKTNVTMKEMGGITQHIGASVVEINDKKVVFLDTPGHEAFTAMRARGASVTDIVVLVVAADDGVMPQTIEAINHVKAANVPLIVAINKIDLPTANPDRVKTELSELGLVPEEWGGNTICVPVSAKKNIGIDDLLEMILLVAEMEDLKANPNKPARGTVIEAKLEKGKGPVATVIVQNGTLQVGDAVIAGTTYGKVRAMFDDKGRKIKKAGPSMPVEILGFSEVPEAGDKFVVVENEKKARELAEKRREVQRELELKKKQKVSLEDLFRQIQEGTVKELNVIIKADVQGSVEALRKSLEELSNEEVRIRVIHGAVGAITETDVMLASASNAIIIGFNVRPETNAKALAEKEKVEIKLYRIIYDAIEDVKAAMKGMLEPKYKEVELGRAEVRAVFKIPGVGNVAGCYVLNGKIARNADVRIVRDGIVIYEGKIASLKRFKDDVREVQQGFECGIGIEKFNDIKEGDIIEAYTMEEIPR.

The segment covering 55 to 80 (LAEKPKEEKQKDQKNHEQEAQDKEEK) has biased composition (basic and acidic residues). The segment at 55 to 88 (LAEKPKEEKQKDQKNHEQEAQDKEEKEIEEDSFY) is disordered. Residues 209–378 (PRPPIVTVMG…LLVAEMEDLK (170 aa)) form the tr-type G domain. Residues 218 to 225 (GHVDHGKT) form a G1 region. 218 to 225 (GHVDHGKT) is a binding site for GTP. Residues 243 to 247 (GITQH) are G2. Residues 264 to 267 (DTPG) are G3. GTP-binding positions include 264-268 (DTPGH) and 318-321 (NKID). The segment at 318-321 (NKID) is G4. The interval 354–356 (SAK) is G5.

The protein belongs to the TRAFAC class translation factor GTPase superfamily. Classic translation factor GTPase family. IF-2 subfamily.

The protein resides in the cytoplasm. In terms of biological role, one of the essential components for the initiation of protein synthesis. Protects formylmethionyl-tRNA from spontaneous hydrolysis and promotes its binding to the 30S ribosomal subunits. Also involved in the hydrolysis of GTP during the formation of the 70S ribosomal complex. This Caldanaerobacter subterraneus subsp. tengcongensis (strain DSM 15242 / JCM 11007 / NBRC 100824 / MB4) (Thermoanaerobacter tengcongensis) protein is Translation initiation factor IF-2.